Here is a 632-residue protein sequence, read N- to C-terminus: Cytosolic Fe-S cluster assembly factor NAR1 (632 aa).

A [4Fe-4S] cluster-binding site is contributed by C20. The interval 27 to 53 is disordered; the sequence is LPAKPEDSSNPYEVTTEDKAAASQPPP. Positions 62, 65, and 68 each coordinate [4Fe-4S] cluster. Disordered stretches follow at residues 99-119 and 210-231; these read WQTQNGTNGTNGTNGTTNGHS and LSPETSNPSTKPGSEGAIDTTP. The segment covering 101–119 has biased composition (low complexity); sequence TQNGTNGTNGTNGTTNGHS. Residues 211–221 show a composition bias toward polar residues; it reads SPETSNPSTKP. Positions 240, 295, 486, and 490 each coordinate [4Fe-4S] cluster. The tract at residues 542–573 is disordered; sequence GSDSEEEKVDQDGDQNMQDATTNGHTSEPDIV. Residues 544–554 show a composition bias toward acidic residues; it reads DSEEEKVDQDG. The segment covering 555-567 has biased composition (polar residues); that stretch reads DQNMQDATTNGHT.

The protein belongs to the NARF family.

Its function is as follows. Component of the cytosolic Fe/S protein assembly machinery. Required for maturation of extramitochondrial Fe/S proteins. May play a role in the transfer of pre-assembled Fe/S clusters to target apoproteins. The sequence is that of Cytosolic Fe-S cluster assembly factor NAR1 (NAR1) from Phaeosphaeria nodorum (strain SN15 / ATCC MYA-4574 / FGSC 10173) (Glume blotch fungus).